The chain runs to 389 residues: Gastricsin (389 aa).

Residues 1–16 (MKWMVVVLLCLQLLEA) form the signal peptide. A propeptide spans 17–59 (KVVKVPLKKLKSLRETMKEKGLLEEFLKNHKYDPAQKYRYTDF) (activation peptide). The region spanning 73 to 386 (YFGEISIGTP…DMGNNRVGFA (314 aa)) is the Peptidase A1 domain. The active site involves Asp91. Intrachain disulfides connect Cys104/Cys109 and Cys268/Cys272. Residue Asp277 is part of the active site. Residues Cys311 and Cys344 are joined by a disulfide bond.

The protein belongs to the peptidase A1 family.

The protein localises to the secreted. It catalyses the reaction More restricted specificity than pepsin A, but shows preferential cleavage at Tyr-|-Xaa bonds. High activity on hemoglobin.. Functionally, hydrolyzes a variety of proteins. The chain is Gastricsin (PGC) from Rhinolophus ferrumequinum (Greater horseshoe bat).